The primary structure comprises 319 residues: Acetyl-coenzyme A carboxylase carboxyl transferase subunit alpha (319 aa).

In terms of domain architecture, CoA carboxyltransferase C-terminal spans 35–296 (NLDEEVQRLR…KAQLLADLND (262 aa)).

The protein belongs to the AccA family. Acetyl-CoA carboxylase is a heterohexamer composed of biotin carboxyl carrier protein (AccB), biotin carboxylase (AccC) and two subunits each of ACCase subunit alpha (AccA) and ACCase subunit beta (AccD).

It localises to the cytoplasm. The catalysed reaction is N(6)-carboxybiotinyl-L-lysyl-[protein] + acetyl-CoA = N(6)-biotinyl-L-lysyl-[protein] + malonyl-CoA. The protein operates within lipid metabolism; malonyl-CoA biosynthesis; malonyl-CoA from acetyl-CoA: step 1/1. Its function is as follows. Component of the acetyl coenzyme A carboxylase (ACC) complex. First, biotin carboxylase catalyzes the carboxylation of biotin on its carrier protein (BCCP) and then the CO(2) group is transferred by the carboxyltransferase to acetyl-CoA to form malonyl-CoA. The protein is Acetyl-coenzyme A carboxylase carboxyl transferase subunit alpha of Yersinia pseudotuberculosis serotype O:3 (strain YPIII).